The following is a 250-amino-acid chain: 2-(R)-hydroxypropyl-CoM dehydrogenase (250 aa).

NAD(+)-binding positions include 12–14 (SGN), Asp-33, 60–61 (DV), and Asn-87. Arg-152 contacts 2-oxopropyl-coenzyme M. Tyr-155 functions as the Proton acceptor in the catalytic mechanism. 188–192 (IETPM) is a binding site for NAD(+). A 2-oxopropyl-coenzyme M-binding site is contributed by 195 to 196 (WR).

Belongs to the short-chain dehydrogenases/reductases (SDR) family. In terms of assembly, homodimer in solution. Homotetramer. Component III of the aliphatic epoxide carboxylation complex together with components I, II and IV.

It carries out the reaction (R)-2-hydroxypropyl-coenzyme M + NAD(+) = 2-oxopropyl-coenzyme M + NADH + H(+). It participates in alkene metabolism; propylene degradation. Inhibited by the arginine-specific modifiers 2,3-butanedione and phenylglyoxal. 2-(2-methyl-2-hydroxypropylthio)ethanesulfonate (M-HPC), an achiral analog of both R-HPC and S-HPC, and (2S)-2-hydroxypropyl-coenzyme M (S-HPC) are competitive inhibitors. Inhibited (at 70%) by the coenzyme M analog 2-bromoethanesulfonate (BES). Functionally, involved in aliphatic epoxide carboxylation. Catalyzes the reversible oxidation of (R)-2-hydroxypropyl-coenzyme M (R-HPC) to 2-oxopropyl-coenzyme M (2-KPC). The enzyme is highly specific for the R enantiomers. In vitro can also use achiral 2-propanol and short-chain (R)- and (S)-2-alkanols. The polypeptide is 2-(R)-hydroxypropyl-CoM dehydrogenase (Xanthobacter autotrophicus (strain ATCC BAA-1158 / Py2)).